We begin with the raw amino-acid sequence, 138 residues long: Protein NrdI (138 aa).

It belongs to the NrdI family.

Its function is as follows. Probably involved in ribonucleotide reductase function. The protein is Protein NrdI of Beutenbergia cavernae (strain ATCC BAA-8 / DSM 12333 / CCUG 43141 / JCM 11478 / NBRC 16432 / NCIMB 13614 / HKI 0122).